A 449-amino-acid chain; its full sequence is Putative recombination initiation defects 3 (449 aa).

Residues 21 to 56 are disordered; it reads LRRSAEPQASQQLRSQQSQQSFSQGPSSSQRGCGGF. Residues 28–50 show a composition bias toward low complexity; sequence QASQQLRSQQSQQSFSQGPSSSQ. Residues 437–441 carry the Nuclear localization signal motif; the sequence is RTKRK.

In terms of assembly, interacts with PRD1; this interaction facilitates a binding to DFO.

The protein localises to the nucleus. Involved in DNA cleavage that forms the double-strand breaks (DSB) that initiate meiotic recombination. This chain is Putative recombination initiation defects 3, found in Arabidopsis thaliana (Mouse-ear cress).